A 309-amino-acid polypeptide reads, in one-letter code: MNRLQVELPGLSLKNPIIPASGCFGFGREYAQFYDLSVLGSIMIKATTEQPRYGNPTPRVAETPGGMLNAIGLQNPGLDKVMNSELPWLEQFDLPIIANVAGSQAEDYVAVAKEISKAPNVHALELNISCPNVKTGGIAFGTNPEIAADLTKRVKEVSEVPVYVKLSPNVANIVEIAKAIENAGADGLTMINTLLGMRLDLKTAKPILANRTGGLSGPAIKPVAIRMVHEVSQAVNIPIIGMGGIETAEDVIEFFYAGASAVAVGTANFIDPFVCPTIIEELPALLDELGFDHISECQGRSWKQTCHSR.

FMN is bound by residues S21 and 45 to 46 (KA). Substrate-binding positions include K45 and 69–73 (NAIGL). FMN is bound by residues N99 and N127. N127 contributes to the substrate binding site. The Nucleophile role is filled by C130. 2 residues coordinate FMN: K165 and I191. 192–193 (NT) is a binding site for substrate. FMN is bound by residues G217, 243–244 (GG), and 265–266 (GT).

Belongs to the dihydroorotate dehydrogenase family. Type 1 subfamily. As to quaternary structure, heterotetramer of 2 PyrK and 2 PyrD type B subunits. It depends on FMN as a cofactor.

It is found in the cytoplasm. The enzyme catalyses (S)-dihydroorotate + NAD(+) = orotate + NADH + H(+). It functions in the pathway pyrimidine metabolism; UMP biosynthesis via de novo pathway; orotate from (S)-dihydroorotate (NAD(+) route): step 1/1. Catalyzes the conversion of dihydroorotate to orotate with NAD(+) as electron acceptor. This is Dihydroorotate dehydrogenase B (NAD(+)), catalytic subunit (pyrD) from Bacillus cereus (strain ATCC 14579 / DSM 31 / CCUG 7414 / JCM 2152 / NBRC 15305 / NCIMB 9373 / NCTC 2599 / NRRL B-3711).